Reading from the N-terminus, the 184-residue chain is NADH-quinone oxidoreductase subunit B (184 aa).

Residues cysteine 63, cysteine 64, cysteine 128, and cysteine 158 each coordinate [4Fe-4S] cluster.

The protein belongs to the complex I 20 kDa subunit family. In terms of assembly, NDH-1 is composed of 14 different subunits. Subunits NuoB, C, D, E, F, and G constitute the peripheral sector of the complex. The cofactor is [4Fe-4S] cluster.

Its subcellular location is the cell inner membrane. It carries out the reaction a quinone + NADH + 5 H(+)(in) = a quinol + NAD(+) + 4 H(+)(out). In terms of biological role, NDH-1 shuttles electrons from NADH, via FMN and iron-sulfur (Fe-S) centers, to quinones in the respiratory chain. The immediate electron acceptor for the enzyme in this species is believed to be ubiquinone. Couples the redox reaction to proton translocation (for every two electrons transferred, four hydrogen ions are translocated across the cytoplasmic membrane), and thus conserves the redox energy in a proton gradient. In Xanthomonas axonopodis pv. citri (strain 306), this protein is NADH-quinone oxidoreductase subunit B.